The chain runs to 663 residues: Protein MNE1 (663 aa).

The chain is Protein MNE1 (MNE1) from Saccharomyces cerevisiae (strain ATCC 204508 / S288c) (Baker's yeast).